We begin with the raw amino-acid sequence, 284 residues long: Tropomyosin alpha-3 chain (284 aa).

Methionine 1 carries the post-translational modification N-acetylmethionine. The segment at 1–40 (MEAIKKKMQMLKLDKENALDRAEQAEAEQKQAEERSKQLE) is disordered. Residues 1 to 284 (MEAIKKKMQM…DHALNDMTSI (284 aa)) are a coiled coil. Residues 12–40 (KLDKENALDRAEQAEAEQKQAEERSKQLE) show a composition bias toward basic and acidic residues. Threonine 53 carries the post-translational modification Phosphothreonine. Serine 61 and serine 87 each carry phosphoserine. Residues threonine 108 and threonine 252 each carry the phosphothreonine modification. Residue tyrosine 261 is modified to Phosphotyrosine. Residue serine 271 is modified to Phosphoserine. Phosphothreonine is present on threonine 282. Position 283 is a phosphoserine (serine 283).

It belongs to the tropomyosin family. Homodimer. Heterodimer of an alpha (TPM1, TPM3 or TPM4) and a beta (TPM2) chain. Interacts with TMOD1. Interacts with TNNT1.

It localises to the cytoplasm. Its subcellular location is the cytoskeleton. Binds to actin filaments in muscle and non-muscle cells. Plays a central role, in association with the troponin complex, in the calcium dependent regulation of vertebrate striated muscle contraction. Smooth muscle contraction is regulated by interaction with caldesmon. In non-muscle cells is implicated in stabilizing cytoskeleton actin filaments. This chain is Tropomyosin alpha-3 chain (TPM3), found in Sus scrofa (Pig).